Here is a 144-residue protein sequence, read N- to C-terminus: Large ribosomal subunit protein uL13 (144 aa).

Belongs to the universal ribosomal protein uL13 family. As to quaternary structure, part of the 50S ribosomal subunit.

This protein is one of the early assembly proteins of the 50S ribosomal subunit, although it is not seen to bind rRNA by itself. It is important during the early stages of 50S assembly. This is Large ribosomal subunit protein uL13 from Mycoplasmopsis pulmonis (strain UAB CTIP) (Mycoplasma pulmonis).